We begin with the raw amino-acid sequence, 223 residues long: Deoxyribose-phosphate aldolase (223 aa).

Residue aspartate 89 is the Proton donor/acceptor of the active site. Lysine 152 acts as the Schiff-base intermediate with acetaldehyde in catalysis. Lysine 181 serves as the catalytic Proton donor/acceptor.

The protein belongs to the DeoC/FbaB aldolase family. DeoC type 1 subfamily.

It is found in the cytoplasm. The catalysed reaction is 2-deoxy-D-ribose 5-phosphate = D-glyceraldehyde 3-phosphate + acetaldehyde. It participates in carbohydrate degradation; 2-deoxy-D-ribose 1-phosphate degradation; D-glyceraldehyde 3-phosphate and acetaldehyde from 2-deoxy-alpha-D-ribose 1-phosphate: step 2/2. Catalyzes a reversible aldol reaction between acetaldehyde and D-glyceraldehyde 3-phosphate to generate 2-deoxy-D-ribose 5-phosphate. In Bacillus cereus (strain ATCC 10987 / NRS 248), this protein is Deoxyribose-phosphate aldolase.